Reading from the N-terminus, the 333-residue chain is 4-hydroxy-3-methylbut-2-enyl diphosphate reductase (333 aa).

Cysteine 20 provides a ligand contact to [4Fe-4S] cluster. (2E)-4-hydroxy-3-methylbut-2-enyl diphosphate is bound by residues histidine 49 and histidine 85. Dimethylallyl diphosphate-binding residues include histidine 49 and histidine 85. Positions 49 and 85 each coordinate isopentenyl diphosphate. Cysteine 107 lines the [4Fe-4S] cluster pocket. Histidine 135 provides a ligand contact to (2E)-4-hydroxy-3-methylbut-2-enyl diphosphate. Histidine 135 is a binding site for dimethylallyl diphosphate. Histidine 135 lines the isopentenyl diphosphate pocket. The active-site Proton donor is the glutamate 137. Threonine 176 provides a ligand contact to (2E)-4-hydroxy-3-methylbut-2-enyl diphosphate. Residue cysteine 206 coordinates [4Fe-4S] cluster. The (2E)-4-hydroxy-3-methylbut-2-enyl diphosphate site is built by serine 234, serine 235, asparagine 236, and serine 279. Residues serine 234, serine 235, asparagine 236, and serine 279 each contribute to the dimethylallyl diphosphate site. Isopentenyl diphosphate contacts are provided by serine 234, serine 235, asparagine 236, and serine 279.

It belongs to the IspH family. It depends on [4Fe-4S] cluster as a cofactor.

It catalyses the reaction isopentenyl diphosphate + 2 oxidized [2Fe-2S]-[ferredoxin] + H2O = (2E)-4-hydroxy-3-methylbut-2-enyl diphosphate + 2 reduced [2Fe-2S]-[ferredoxin] + 2 H(+). It carries out the reaction dimethylallyl diphosphate + 2 oxidized [2Fe-2S]-[ferredoxin] + H2O = (2E)-4-hydroxy-3-methylbut-2-enyl diphosphate + 2 reduced [2Fe-2S]-[ferredoxin] + 2 H(+). It functions in the pathway isoprenoid biosynthesis; dimethylallyl diphosphate biosynthesis; dimethylallyl diphosphate from (2E)-4-hydroxy-3-methylbutenyl diphosphate: step 1/1. Its pathway is isoprenoid biosynthesis; isopentenyl diphosphate biosynthesis via DXP pathway; isopentenyl diphosphate from 1-deoxy-D-xylulose 5-phosphate: step 6/6. Its function is as follows. Catalyzes the conversion of 1-hydroxy-2-methyl-2-(E)-butenyl 4-diphosphate (HMBPP) into a mixture of isopentenyl diphosphate (IPP) and dimethylallyl diphosphate (DMAPP). Acts in the terminal step of the DOXP/MEP pathway for isoprenoid precursor biosynthesis. The sequence is that of 4-hydroxy-3-methylbut-2-enyl diphosphate reductase from Rhizobium leguminosarum bv. trifolii (strain WSM2304).